A 180-amino-acid polypeptide reads, in one-letter code: Crossover junction endodeoxyribonuclease RuvC (180 aa).

Active-site residues include D7, E66, and D138. 3 residues coordinate Mg(2+): D7, E66, and D138.

It belongs to the RuvC family. In terms of assembly, homodimer which binds Holliday junction (HJ) DNA. The HJ becomes 2-fold symmetrical on binding to RuvC with unstacked arms; it has a different conformation from HJ DNA in complex with RuvA. In the full resolvosome a probable DNA-RuvA(4)-RuvB(12)-RuvC(2) complex forms which resolves the HJ. The cofactor is Mg(2+).

It is found in the cytoplasm. The catalysed reaction is Endonucleolytic cleavage at a junction such as a reciprocal single-stranded crossover between two homologous DNA duplexes (Holliday junction).. In terms of biological role, the RuvA-RuvB-RuvC complex processes Holliday junction (HJ) DNA during genetic recombination and DNA repair. Endonuclease that resolves HJ intermediates. Cleaves cruciform DNA by making single-stranded nicks across the HJ at symmetrical positions within the homologous arms, yielding a 5'-phosphate and a 3'-hydroxyl group; requires a central core of homology in the junction. The consensus cleavage sequence is 5'-(A/T)TT(C/G)-3'. Cleavage occurs on the 3'-side of the TT dinucleotide at the point of strand exchange. HJ branch migration catalyzed by RuvA-RuvB allows RuvC to scan DNA until it finds its consensus sequence, where it cleaves and resolves the cruciform DNA. The chain is Crossover junction endodeoxyribonuclease RuvC from Burkholderia pseudomallei (strain 668).